Reading from the N-terminus, the 245-residue chain is DNA repair protein RecO (245 aa).

It belongs to the RecO family.

Its function is as follows. Involved in DNA repair and RecF pathway recombination. In Porphyromonas gingivalis (strain ATCC 33277 / DSM 20709 / CIP 103683 / JCM 12257 / NCTC 11834 / 2561), this protein is DNA repair protein RecO.